Reading from the N-terminus, the 319-residue chain is Exopolyphosphatase 2 (319 aa).

It belongs to the GppA/Ppx family. As to quaternary structure, homodimer.

It catalyses the reaction [phosphate](n) + H2O = [phosphate](n-1) + phosphate + H(+). Exopolyphosphatase activity is inhibited by ppGpp alarmones produced during the bacterial stringent response. Its function is as follows. Degradation of inorganic polyphosphates (polyP). Releases orthophosphate processively from the ends of the polyP chain. Prefers long-chain length polyphosphates as substrates. This is Exopolyphosphatase 2 from Mycobacterium tuberculosis (strain CDC 1551 / Oshkosh).